The following is a 206-amino-acid chain: MARYTGATCKLCRREGMKLFLKGDRCYTDKCAFVRRSYAPGQHGASRKKLSNYGTQLREKQKAKRIYGVLEGQFRNTYERAEKMRGIAGENLLKLLEMRLDNVVYRLGYGASRTEARQLVNHGHFLVNGKKVDIASFKVSVNDVITVCEKSRGSERFKMFAENPKALPKWLEANVENFEGKVVAEPAREDIDVPVNETLIVELYSK.

Residues 98–163 enclose the S4 RNA-binding domain; it reads MRLDNVVYRL…SERFKMFAEN (66 aa).

Belongs to the universal ribosomal protein uS4 family. As to quaternary structure, part of the 30S ribosomal subunit. Contacts protein S5. The interaction surface between S4 and S5 is involved in control of translational fidelity.

Functionally, one of the primary rRNA binding proteins, it binds directly to 16S rRNA where it nucleates assembly of the body of the 30S subunit. Its function is as follows. With S5 and S12 plays an important role in translational accuracy. This chain is Small ribosomal subunit protein uS4A, found in Clostridium perfringens (strain ATCC 13124 / DSM 756 / JCM 1290 / NCIMB 6125 / NCTC 8237 / Type A).